We begin with the raw amino-acid sequence, 170 residues long: Sec-independent protein translocase protein TatB (170 aa).

The chain crosses the membrane as a helical span at residues 1–21 (MIDFGFDKIALIGAVALIVIG). The segment at 69–170 (AARNVEQSVS…VARFRPPRPL (102 aa)) is disordered. The segment covering 73-93 (VEQSVSSEVNRTSSEMNQAWE) has biased composition (polar residues). Over residues 128–137 (HPRKNWRLKR) the composition is skewed to basic residues.

It belongs to the TatB family. In terms of assembly, the Tat system comprises two distinct complexes: a TatABC complex, containing multiple copies of TatA, TatB and TatC subunits, and a separate TatA complex, containing only TatA subunits. Substrates initially bind to the TatABC complex, which probably triggers association of the separate TatA complex to form the active translocon.

The protein localises to the cell inner membrane. Part of the twin-arginine translocation (Tat) system that transports large folded proteins containing a characteristic twin-arginine motif in their signal peptide across membranes. Together with TatC, TatB is part of a receptor directly interacting with Tat signal peptides. TatB may form an oligomeric binding site that transiently accommodates folded Tat precursor proteins before their translocation. The polypeptide is Sec-independent protein translocase protein TatB (Methylibium petroleiphilum (strain ATCC BAA-1232 / LMG 22953 / PM1)).